The sequence spans 64 residues: Large ribosomal subunit protein bL28 (64 aa).

It belongs to the bacterial ribosomal protein bL28 family.

The sequence is that of Large ribosomal subunit protein bL28 from Bifidobacterium adolescentis (strain ATCC 15703 / DSM 20083 / NCTC 11814 / E194a).